The following is a 476-amino-acid chain: Protein DETOXIFICATION 4 (476 aa).

A run of 12 helical transmembrane segments spans residues 35–55 (AVPM…SVMV), 66–86 (GVAL…FGLV), 117–137 (IPIC…LISL), 154–174 (LIPT…LLAQ), 176–196 (LVLP…AVCW), 208–228 (GAAL…SCYV), 260–280 (AAML…SGLL), 289–309 (VLSI…GVAA), 332–352 (LAGL…LFAF), 370–390 (VADL…TAVL), 408–428 (VVAY…SCEL), and 433–453 (LWCG…IVTA).

It belongs to the multi antimicrobial extrusion (MATE) (TC 2.A.66.1) family.

The protein localises to the membrane. The polypeptide is Protein DETOXIFICATION 4 (Arabidopsis thaliana (Mouse-ear cress)).